Here is a 171-residue protein sequence, read N- to C-terminus: Protein TIFY 11d (171 aa).

A Tify domain is found at 65–100; that stretch reads PSAGTAPLTIFYDGRMVVVDDVPVEKAAELMRLAGS. A Jas motif is present at residues 117-142; sequence PIARKASLQRFLQKRKHRITTTSEPY. The Nuclear localization signal motif lies at 119–126; the sequence is ARKASLQR.

Belongs to the TIFY/JAZ family. In terms of assembly, interacts with BHLH148 and COI1A. Interacts with COI1A, COI1B and COI2 in a coronatine-dependent manner. Coronatine is an analog of jasmonoyl isoleucine (JA-Ile). Post-translationally, ubiquitinated. Increase in jasmonoyl isoleucine (JA-Ile) levels mediates its degradation via COI1A-mediated proteasome pathway.

The protein localises to the nucleus. Its function is as follows. Repressor of jasmonate (JA) responses. May act on an initial response of JA-regulated gene expression toward drought tolerance as part of a BHLH148-TIFY11D/JAZ12-COI1A complex. This is Protein TIFY 11d from Oryza sativa subsp. japonica (Rice).